We begin with the raw amino-acid sequence, 2225 residues long: Multifunctional protein CAD (2225 aa).

The residue at position 2 (Ala-2) is an N-acetylalanine. A GATase (Glutamine amidotransferase) region spans residues 2–365; sequence AALVLEDGSV…TVKEATAGNP (364 aa). Positions 44, 222, and 224 each coordinate L-glutamine. The 187-residue stretch at 177–363 folds into the Glutamine amidotransferase type-1 domain; sequence RILALDCGLK…LETVKEATAG (187 aa). Cys-252 (nucleophile; for GATase activity) is an active-site residue. The L-glutamine site is built by Leu-253, Gln-256, Asn-294, Gly-296, and Phe-297. Residues His-336 and Glu-338 each act as for GATase activity in the active site. Residues 366–394 are linker; sequence GGQTVRERLTERLCPPGIPTPGSGLPPPR. The interval 395–933 is CPSase A; the sequence is KVLILGSGGL…TTHDLTFRTP (539 aa). Positions 395–1455 are CPSase (Carbamoyl phosphate synthase); it reads KVLILGSGGL…APPLKVHVDC (1061 aa). Thr-456 carries the post-translational modification Phosphothreonine; by MAPK1. Residues Arg-515, Arg-555, Gly-561, Gly-562, Lys-592, Glu-599, Gly-625, Ile-626, His-627, Gln-668, and Glu-682 each coordinate ATP. Residues 519–711 enclose the ATP-grasp 1 domain; it reads AARMAEIGEH…LAYVAAKLAL (193 aa). Positions 668, 682, and 684 each coordinate Mg(2+). The Mn(2+) site is built by Gln-668, Glu-682, and Asn-684. Lys-747 is modified (N6-acetyllysine). The tract at residues 934–1455 is CPSase B; sequence HVLVLGSGVY…APPLKVHVDC (522 aa). A Phosphoserine modification is found at Ser-1038. One can recognise an ATP-grasp 2 domain in the interval 1052–1243; the sequence is SRLLDTIGIS…LVALATRVIM (192 aa). Positions 1088, 1127, 1129, 1134, 1159, 1160, 1161, 1162, 1202, and 1214 each coordinate ATP. Mg(2+)-binding residues include Gln-1202, Glu-1214, and Asn-1216. The Mn(2+) site is built by Gln-1202, Glu-1214, and Asn-1216. The MGS-like domain maps to 1308–1462; that stretch reads FKIPKKNILL…VDCMTSQKLV (155 aa). Ser-1406 is modified (phosphoserine; by PKA). Lys-1411 bears the N6-acetyllysine mark. The segment at 1456–1788 is DHOase (dihydroorotase); sequence MTSQKLVRLP…VKGTVRRVVL (333 aa). Zn(2+) is bound by residues His-1471 and His-1473. 2 residues coordinate (S)-dihydroorotate: Arg-1475 and Asn-1505. Residues Lys-1556, His-1590, Cys-1613, His-1614, and Glu-1637 each coordinate Zn(2+). The residue at position 1556 (Lys-1556) is an N6-carboxylysine. Arg-1661 lines the (S)-dihydroorotate pocket. A Zn(2+)-binding site is contributed by Asp-1686. The active-site For DHOase activity is the Asp-1686. 2 residues coordinate (S)-dihydroorotate: His-1690 and Pro-1702. Positions 1789–1917 are linker; that stretch reads RGEVAYIDGQ…GLLHPQTSPL (129 aa). The segment at 1811–1899 is disordered; sequence KWPQGAVPQL…YPPPPVPRQA (89 aa). The span at 1825 to 1834 shows a compositional bias: polar residues; that stretch reads PATSEMTTTP. The residue at position 1859 (Ser-1859) is a Phosphoserine; by RPS6KB1 and PKA. Positions 1866–1878 are enriched in basic and acidic residues; it reads EEPKEKSSRKVAE. A Phosphoserine; by PKC; in vitro modification is found at Ser-1873. Thr-1884 bears the Phosphothreonine mark. Phosphoserine occurs at positions 1900 and 1938. Residues 1918–2225 form an ATCase (Aspartate transcarbamylase) region; sequence LHSLVGQHIL…ALLATVLGRF (308 aa). Arg-1975 and Thr-1976 together coordinate carbamoyl phosphate. Lys-2003 contacts L-aspartate. Carbamoyl phosphate-binding residues include Arg-2024, His-2052, and Gln-2055. 2 residues coordinate L-aspartate: Arg-2085 and Arg-2146. The carbamoyl phosphate site is built by Met-2185 and Pro-2186.

In the N-terminal section; belongs to the CarA family. This sequence in the 2nd section; belongs to the CarB family. The protein in the 3rd section; belongs to the metallo-dependent hydrolases superfamily. DHOase family. CAD subfamily. It in the C-terminal section; belongs to the aspartate/ornithine carbamoyltransferase superfamily. ATCase family. As to quaternary structure, homohexamer. Interacts with CIPC. The cofactor is Zn(2+). It depends on Mg(2+) as a cofactor. Mn(2+) is required as a cofactor. In terms of processing, activated by MAP kinase (Erk1/2) phosphorylation just prior to the S phase of the cell cycle, when the demand for pyrimidine nucleotides is greatest, and down-regulated as the cells emerge from S phase by protein kinase A (PKA) phosphorylation. Phosphorylation at Ser-1859 by RPS6KB1 downstream of MTOR promotes oligomerization and stimulates dihydroorotase activity. Phosphorylation at Ser-1406 reduces sensitivity to feedback inhibition by UTP.

The protein resides in the cytoplasm. It is found in the nucleus. The enzyme catalyses hydrogencarbonate + L-glutamine + 2 ATP + H2O = carbamoyl phosphate + L-glutamate + 2 ADP + phosphate + 2 H(+). It carries out the reaction L-glutamine + H2O = L-glutamate + NH4(+). It catalyses the reaction hydrogencarbonate + NH4(+) + 2 ATP = carbamoyl phosphate + 2 ADP + phosphate + 2 H(+). The catalysed reaction is carbamoyl phosphate + L-aspartate = N-carbamoyl-L-aspartate + phosphate + H(+). The enzyme catalyses (S)-dihydroorotate + H2O = N-carbamoyl-L-aspartate + H(+). Its pathway is pyrimidine metabolism; UMP biosynthesis via de novo pathway; (S)-dihydroorotate from bicarbonate: step 1/3. The protein operates within pyrimidine metabolism; UMP biosynthesis via de novo pathway; (S)-dihydroorotate from bicarbonate: step 2/3. It participates in pyrimidine metabolism; UMP biosynthesis via de novo pathway; (S)-dihydroorotate from bicarbonate: step 3/3. With respect to regulation, allosterically regulated and controlled by phosphorylation. 5-phosphoribose 1-diphosphate (PRPP) is an activator while UMP and UTP are inhibitors of the CPSase reaction. Functionally, multifunctional protein that encodes the first 3 enzymatic activities of the de novo pyrimidine pathway: carbamoylphosphate synthetase (CPSase; EC 6.3.5.5), aspartate transcarbamylase (ATCase; EC 2.1.3.2) and dihydroorotase (DHOase; EC 3.5.2.3). The CPSase-function is accomplished in 2 steps, by a glutamine-dependent amidotransferase activity (GATase) that binds and cleaves glutamine to produce ammonia, followed by an ammonium-dependent carbamoyl phosphate synthetase, which reacts with the ammonia, hydrogencarbonate and ATP to form carbamoyl phosphate. The endogenously produced carbamoyl phosphate is sequestered and channeled to the ATCase active site. ATCase then catalyzes the formation of carbamoyl-L-aspartate from L-aspartate and carbamoyl phosphate. In the last step, DHOase catalyzes the cyclization of carbamoyl aspartate to dihydroorotate. The polypeptide is Multifunctional protein CAD (Homo sapiens (Human)).